The primary structure comprises 76 residues: ATP synthase subunit 9, mitochondrial (76 aa).

A run of 2 helical transmembrane segments spans residues 13–35 and 50–72; these read GIST…ALIQ and FAIL…SFLL.

This sequence belongs to the ATPase C chain family. In terms of assembly, F-type ATPases have 2 components, CF(1) - the catalytic core - and CF(0) - the membrane proton channel. In yeast, the dimeric form of ATP synthase consists of 18 polypeptides: alpha, beta, gamma, delta, epsilon, 4 (B), 5 (OSCP), 6 (A), 8, 9 (C), d, E (Tim11), f, g, h, i, j and k.

It localises to the mitochondrion membrane. In terms of biological role, mitochondrial membrane ATP synthase (F(1)F(0) ATP synthase or Complex V) produces ATP from ADP in the presence of a proton gradient across the membrane which is generated by electron transport complexes of the respiratory chain. F-type ATPases consist of two structural domains, F(1) - containing the extramembraneous catalytic core and F(0) - containing the membrane proton channel, linked together by a central stalk and a peripheral stalk. During catalysis, ATP synthesis in the catalytic domain of F(1) is coupled via a rotary mechanism of the central stalk subunits to proton translocation. Part of the complex F(0) domain. A homomeric c-ring of probably 10 subunits is part of the complex rotary element. The chain is ATP synthase subunit 9, mitochondrial (ATP9) from Eremothecium gossypii (strain ATCC 10895 / CBS 109.51 / FGSC 9923 / NRRL Y-1056) (Yeast).